The chain runs to 79 residues: U16-theraphotoxin-Cg1a (79 aa).

The signal sequence occupies residues 1–19; the sequence is MRALLIIAGLALFLVVCNA. A propeptide spanning residues 20–44 is cleaved from the precursor; that stretch reads SQVNEQRKLNEMLSVMFAVEEPQER. 3 disulfides stabilise this stretch: C47–C62, C54–C67, and C61–C74.

The protein belongs to the neurotoxin 10 (Hwtx-1) family. 34 (Jztx-26) subfamily. Expressed by the venom gland.

It localises to the secreted. Its function is as follows. Probable ion channel inhibitor. This Chilobrachys guangxiensis (Chinese earth tiger tarantula) protein is U16-theraphotoxin-Cg1a.